Reading from the N-terminus, the 263-residue chain is uncharacterized protein (263 aa).

Positions 1–22 (MRYLKRVVLYRIVMVLSVFIIG) are cleaved as a signal peptide. Cys-23 is lipidated: N-palmitoyl cysteine. The S-diacylglycerol cysteine moiety is linked to residue Cys-23.

Belongs to the staphylococcal tandem lipoprotein family.

The protein localises to the cell membrane. This is an uncharacterized protein from Staphylococcus aureus (strain bovine RF122 / ET3-1).